The primary structure comprises 141 residues: Galactose-6-phosphate isomerase subunit LacA (141 aa).

This sequence belongs to the LacAB/RpiB family. Heteromultimeric protein consisting of LacA and LacB.

It catalyses the reaction aldehydo-D-galactose 6-phosphate = keto-D-tagatose 6-phosphate. It participates in carbohydrate metabolism; D-galactose 6-phosphate degradation; D-tagatose 6-phosphate from D-galactose 6-phosphate: step 1/1. The polypeptide is Galactose-6-phosphate isomerase subunit LacA (Streptococcus agalactiae serotype Ia (strain ATCC 27591 / A909 / CDC SS700)).